Consider the following 262-residue polypeptide: Late embryogenesis abundant protein 31 (262 aa).

A Nuclear localization signal (NLS) motif is present at residues 6–10 (QPKRP). SMP domains follow at residues 14 to 68 (VTYG…ANKR), 136 to 192 (ITIG…NHNA), and 201 to 260 (IKLI…NERA).

Belongs to the LEA type SMP family. In terms of tissue distribution, embryo specific, only in dry mature seeds.

The protein localises to the nucleus. The protein resides in the nucleolus. It is found in the cytoplasm. In terms of biological role, LEA proteins are late embryonic proteins abundant in higher plant seed embryos. The function of those proteins is not known. Promotes germination rate. Enhances cation toxicity (e.g. lithium ion) and osmotic stress (e.g. NaCl and sorbitol) tolerance during germination and in seedlings. In Arabidopsis thaliana (Mouse-ear cress), this protein is Late embryogenesis abundant protein 31.